A 115-amino-acid polypeptide reads, in one-letter code: MVRCHVKSPTESPPGQQGSGQQGETEHPDQARELRPEDIPVYGRTHRGRYHYRHRSHTRRRPYRRRRRRACRHRRRRRGAAGPPCAPIPGTPQASRQGSGCRRMRRRRRRCGRQL.

The disordered stretch occupies residues 1–115 (MVRCHVKSPT…RRRRRCGRQL (115 aa)). Ser8 bears the Phosphoserine mark. A compositionally biased stretch (basic and acidic residues) spans 24–38 (ETEHPDQARELRPED). 2 stretches are compositionally biased toward basic residues: residues 44–79 (RTHRGRYHYRHRSHTRRRPYRRRRRRACRHRRRRRG) and 102–115 (RRMRRRRRRCGRQL).

This sequence belongs to the protamine P2 family. Interacts with TDRP. In terms of processing, proteolytic processing into mature chains is required for histone eviction during spermatogenesis. Transition proteins (TNP1 and TNP2) are required for processing. As to expression, testis.

It localises to the nucleus. It is found in the chromosome. Its function is as follows. Protamines substitute for histones in the chromatin of sperm during the haploid phase of spermatogenesis. They compact sperm DNA into a highly condensed, stable and inactive complex. In Bos taurus (Bovine), this protein is Protamine-2 (PRM2).